The sequence spans 476 residues: ATP synthase subunit beta (476 aa).

Position 154 to 161 (154 to 161) interacts with ATP; the sequence is GGAGVGKT.

This sequence belongs to the ATPase alpha/beta chains family. F-type ATPases have 2 components, CF(1) - the catalytic core - and CF(0) - the membrane proton channel. CF(1) has five subunits: alpha(3), beta(3), gamma(1), delta(1), epsilon(1). CF(0) has four main subunits: a(1), b(1), b'(1) and c(9-12).

The protein resides in the cell inner membrane. The enzyme catalyses ATP + H2O + 4 H(+)(in) = ADP + phosphate + 5 H(+)(out). Produces ATP from ADP in the presence of a proton gradient across the membrane. The catalytic sites are hosted primarily by the beta subunits. The chain is ATP synthase subunit beta from Rhodopseudomonas palustris (strain BisA53).